The primary structure comprises 433 residues: MTETLLKKKLNLNDQFLLNLKNYQEIFWKNPNYGDELPDLDVNRETIFQANRRLERFAPYLESVFSDTKRSKGIIESPIQRMDSIKDLLSVKGSLLIKRDDLMPVSGSIKSRGGIYEVLCFAEKIAIENGFDLKKDNYQDLRKDKYRKLFNQWRIEVASTGNLGLSVGLMASTLGFKARIHMSHDATDWKINKLLQNGVEVKIYDDNFSNAVAAARVSSQRDPYSYFIDDEGSKLLFAGYATAGERVKKQLSKMQIEVSKEHPLVVYLPAGVGGSPSGVAFGLKLQFADAVIPIFVEPTHMPSVLLGMASGLNHDISVYDIGIDGKTAADGLAVGRPSMIAGKYMKDKLFGIATVSDSDMFAYQGMLKKLENIEVEPSAAVGIRGLIQSKEISEIPDSATHMVWATGGSMVPKNTMHKYEDKAVRIFNTWKSE.

Lys-110 bears the N6-(pyridoxal phosphate)lysine mark.

The protein belongs to the serine/threonine dehydratase family. DsdA subfamily. The cofactor is pyridoxal 5'-phosphate.

The enzyme catalyses D-serine = pyruvate + NH4(+). The protein is Probable D-serine dehydratase of Oenococcus oeni (strain ATCC BAA-331 / PSU-1).